Consider the following 78-residue polypeptide: Short neurotoxin 342 (78 aa).

The N-terminal stretch at 1 to 21 (MKTLLLTLVVLTIVCLDLGYT) is a signal peptide. Disulfide bonds link Cys-24-Cys-43, Cys-38-Cys-57, Cys-59-Cys-70, and Cys-71-Cys-76.

The protein belongs to the three-finger toxin family. Short-chain subfamily. Type I alpha-neurotoxin sub-subfamily. In terms of tissue distribution, expressed by the venom gland.

Its subcellular location is the secreted. Binds to muscle nicotinic acetylcholine receptor (nAChR) and inhibit acetylcholine from binding to the receptor, thereby impairing neuromuscular transmission. The sequence is that of Short neurotoxin 342 from Drysdalia coronoides (White-lipped snake).